Reading from the N-terminus, the 277-residue chain is Energy-coupling factor transporter ATP-binding protein EcfA (277 aa).

In terms of domain architecture, ABC transporter spans Leu4–Asp238. Gly37–Ser44 contributes to the ATP binding site.

The protein belongs to the ABC transporter superfamily. Energy-coupling factor EcfA family. As to quaternary structure, forms a stable energy-coupling factor (ECF) transporter complex composed of 2 membrane-embedded substrate-binding proteins (S component), 2 ATP-binding proteins (A component) and 2 transmembrane proteins (T component).

It localises to the cell membrane. Functionally, ATP-binding (A) component of a common energy-coupling factor (ECF) ABC-transporter complex. Unlike classic ABC transporters this ECF transporter provides the energy necessary to transport a number of different substrates. The polypeptide is Energy-coupling factor transporter ATP-binding protein EcfA (Methanoculleus marisnigri (strain ATCC 35101 / DSM 1498 / JR1)).